Consider the following 290-residue polypeptide: Porphobilinogen deaminase (290 aa).

Position 237 is an S-(dipyrrolylmethanemethyl)cysteine (Cys237).

Belongs to the HMBS family. Monomer. Dipyrromethane is required as a cofactor.

It catalyses the reaction 4 porphobilinogen + H2O = hydroxymethylbilane + 4 NH4(+). The protein operates within porphyrin-containing compound metabolism; protoporphyrin-IX biosynthesis; coproporphyrinogen-III from 5-aminolevulinate: step 2/4. Functionally, tetrapolymerization of the monopyrrole PBG into the hydroxymethylbilane pre-uroporphyrinogen in several discrete steps. In Clostridium botulinum (strain 657 / Type Ba4), this protein is Porphobilinogen deaminase.